Reading from the N-terminus, the 695-residue chain is Calcium-dependent serine proteinase (695 aa).

The signal sequence occupies residues 1-21 (MGKSSEAWCIVLFSVFASFSA). The CUB 1 domain maps to 22 to 136 (EPTMHGEILS…TGFAAYYAAI (115 aa)). Intrachain disulfides connect cysteine 71–cysteine 89, cysteine 141–cysteine 153, cysteine 149–cysteine 162, and cysteine 164–cysteine 177. An EGF-like; calcium-binding domain is found at 137 to 178 (DVNECTDFTDVPCSHFCNNFIGGYFCSCPPEYFLHDDMRNCG). (3R)-3-hydroxyasparagine is present on asparagine 155. The N-linked (GlcNAc...) asparagine glycan is linked to asparagine 180. 6 disulfide bridges follow: cysteine 181/cysteine 208, cysteine 240/cysteine 257, cysteine 300/cysteine 347, cysteine 327/cysteine 360, cysteine 365/cysteine 410, and cysteine 392/cysteine 428. Residues 181–296 (CSGNVFTALI…KGWKLRYHGD (116 aa)) form the CUB 2 domain. 2 consecutive Sushi domains span residues 298–362 (IPCP…RCQP) and 363–430 (VDCG…KCVP). A glycan (N-linked (GlcNAc...) asparagine) is linked at asparagine 413. The 243-residue stretch at 445 to 687 (IFGGFPAKIQ…YKDWILQTMQ (243 aa)) folds into the Peptidase S1 domain. Catalysis depends on charge relay system residues histidine 482 and aspartate 536. 2 cysteine pairs are disulfide-bonded: cysteine 602/cysteine 625 and cysteine 634/cysteine 666. Residue serine 638 is the Charge relay system of the active site.

Belongs to the peptidase S1 family. Heterodimer, consisting of heavy and light chains with disulfide bonds. The heavy chain is expected to be a regulatory subunit and the light chain contains the catalytic site. In terms of processing, the iron and 2-oxoglutarate dependent 3-hydroxylation of aspartate and asparagine is (R) stereospecific within EGF domains.

It localises to the secreted. The protein localises to the extracellular space. It is found in the extracellular matrix. In terms of biological role, capable of degrading extracellular matrix proteins. CASP degrades type I and IV collagen and fibronectin in the presence of calcium. This chain is Calcium-dependent serine proteinase, found in Mesocricetus auratus (Golden hamster).